A 369-amino-acid polypeptide reads, in one-letter code: UDP-N-acetylglucosamine--N-acetylmuramyl-(pentapeptide) pyrophosphoryl-undecaprenol N-acetylglucosamine transferase (369 aa).

UDP-N-acetyl-alpha-D-glucosamine-binding positions include 10–12, Asn-124, Arg-166, Ser-196, Ile-251, and Gln-296; that span reads TAG.

Belongs to the glycosyltransferase 28 family. MurG subfamily.

It is found in the cell membrane. It carries out the reaction di-trans,octa-cis-undecaprenyl diphospho-N-acetyl-alpha-D-muramoyl-L-alanyl-D-glutamyl-meso-2,6-diaminopimeloyl-D-alanyl-D-alanine + UDP-N-acetyl-alpha-D-glucosamine = di-trans,octa-cis-undecaprenyl diphospho-[N-acetyl-alpha-D-glucosaminyl-(1-&gt;4)]-N-acetyl-alpha-D-muramoyl-L-alanyl-D-glutamyl-meso-2,6-diaminopimeloyl-D-alanyl-D-alanine + UDP + H(+). The protein operates within cell wall biogenesis; peptidoglycan biosynthesis. Functionally, cell wall formation. Catalyzes the transfer of a GlcNAc subunit on undecaprenyl-pyrophosphoryl-MurNAc-pentapeptide (lipid intermediate I) to form undecaprenyl-pyrophosphoryl-MurNAc-(pentapeptide)GlcNAc (lipid intermediate II). The sequence is that of UDP-N-acetylglucosamine--N-acetylmuramyl-(pentapeptide) pyrophosphoryl-undecaprenol N-acetylglucosamine transferase from Acetivibrio thermocellus (strain ATCC 27405 / DSM 1237 / JCM 9322 / NBRC 103400 / NCIMB 10682 / NRRL B-4536 / VPI 7372) (Clostridium thermocellum).